Reading from the N-terminus, the 857-residue chain is Putative disease resistance protein At1g50180 (857 aa).

Residues 27-60 adopt a coiled-coil conformation; it reads IGDQVKQLQDELKRLNCFLKDADEKQHESERVRN. Residues 148 to 461 enclose the NB-ARC domain; sequence SLREQRQSFP…AEGMVMPVKH (314 aa). Residue 192 to 199 coordinates ATP; sequence GMGGLGKT. 4 LRR repeats span residues 653-678, 680-703, 754-780, and 791-816; these read MTSL…SLSK, LKRL…DVTQ, LPNL…NLEN, and MMRL…RFLK.

The protein belongs to the disease resistance NB-LRR family.

Its function is as follows. Potential disease resistance protein. The protein is Putative disease resistance protein At1g50180 of Arabidopsis thaliana (Mouse-ear cress).